The primary structure comprises 887 residues: Beta-galactosidase 9 (887 aa).

Residues 1–30 (MAESIRTFSLQWRILSLIIALLVYFPILSG) form the signal peptide. N37 carries N-linked (GlcNAc...) asparagine glycosylation. E194 acts as the Proton donor in catalysis. The active-site Nucleophile is the E263. N-linked (GlcNAc...) asparagine glycosylation is found at N463, N485, N496, N527, and N785. Positions 791-877 (NSVAPEVHLH…KTLAVMSRCS (87 aa)) constitute an SUEL-type lectin domain. N881 carries N-linked (GlcNAc...) asparagine glycosylation.

It belongs to the glycosyl hydrolase 35 family. In terms of tissue distribution, ubiquitous, with higher expression levels in siliques.

The protein localises to the secreted. Its subcellular location is the extracellular space. It localises to the apoplast. It carries out the reaction Hydrolysis of terminal non-reducing beta-D-galactose residues in beta-D-galactosides.. This is Beta-galactosidase 9 (BGAL9) from Arabidopsis thaliana (Mouse-ear cress).